Consider the following 342-residue polypeptide: MSARPGLLARAEARLTREWQRRGALAWALAPFACAFGAIAALRRAAYARGWKARVDCGVPVVVVGNVTVGGTGKTPTVIALVDALRAAGFTPGVVSRGYGAKIAAPTAVTAASPPQQAGDEPLLIARRTLAPVWVCPDRVAAVRALKAAHPEVDVVVSDDGLQHYRLARAVEIVVFDHRLGGNGFLLPAGPLREPLSRRRDATLVNDPYSRALPPWPDTFALSLAPGDAWHLDRPSRRKPLAQFAGERVLAAAGIGAPERFFATLRAAGVAPATRALPDHYAFATNPFVDDHFDAILITEKDAVKLGTSWRDARIWVVPVEAALDPRLIALVVEKLRGRTSA.

68-75 (TVGGTGKT) contributes to the ATP binding site.

The protein belongs to the LpxK family.

The catalysed reaction is a lipid A disaccharide + ATP = a lipid IVA + ADP + H(+). Its pathway is glycolipid biosynthesis; lipid IV(A) biosynthesis; lipid IV(A) from (3R)-3-hydroxytetradecanoyl-[acyl-carrier-protein] and UDP-N-acetyl-alpha-D-glucosamine: step 6/6. In terms of biological role, transfers the gamma-phosphate of ATP to the 4'-position of a tetraacyldisaccharide 1-phosphate intermediate (termed DS-1-P) to form tetraacyldisaccharide 1,4'-bis-phosphate (lipid IVA). The chain is Tetraacyldisaccharide 4'-kinase from Burkholderia pseudomallei (strain K96243).